The chain runs to 23 residues: Clavanin-B (23 aa).

At phenylalanine 23 the chain carries Phenylalanine amide.

The protein resides in the secreted. Functionally, has antimicrobial activity. The sequence is that of Clavanin-B from Styela clava (Sea squirt).